The chain runs to 496 residues: Glycogen synthase (496 aa).

ADP-alpha-D-glucose is bound at residue K15.

The protein belongs to the glycosyltransferase 1 family. Bacterial/plant glycogen synthase subfamily.

It carries out the reaction [(1-&gt;4)-alpha-D-glucosyl](n) + ADP-alpha-D-glucose = [(1-&gt;4)-alpha-D-glucosyl](n+1) + ADP + H(+). The protein operates within glycan biosynthesis; glycogen biosynthesis. Synthesizes alpha-1,4-glucan chains using ADP-glucose. This chain is Glycogen synthase, found in Natranaerobius thermophilus (strain ATCC BAA-1301 / DSM 18059 / JW/NM-WN-LF).